Consider the following 550-residue polypeptide: Hydroxylamine reductase (550 aa).

The [2Fe-2S] cluster site is built by Cys-3, Cys-6, Cys-18, and Cys-25. Hybrid [4Fe-2O-2S] cluster-binding residues include His-249, Glu-273, Cys-317, Cys-405, Cys-433, Cys-458, Glu-492, and Lys-494. Cys-405 bears the Cysteine persulfide mark.

This sequence belongs to the HCP family. It depends on [2Fe-2S] cluster as a cofactor. Requires hybrid [4Fe-2O-2S] cluster as cofactor.

The protein localises to the cytoplasm. The catalysed reaction is A + NH4(+) + H2O = hydroxylamine + AH2 + H(+). Catalyzes the reduction of hydroxylamine to form NH(3) and H(2)O. This is Hydroxylamine reductase from Yersinia pseudotuberculosis serotype IB (strain PB1/+).